Reading from the N-terminus, the 399-residue chain is Fe-coproporphyrin III synthase (399 aa).

A Radical SAM core domain is found at 36-253 (KDKKPVVVWN…TRKLHEKGFP (218 aa)). [4Fe-4S] cluster-binding residues include C50, C54, and C57.

This sequence belongs to the radical SAM superfamily. [4Fe-4S] cluster serves as cofactor.

The catalysed reaction is 12,18-didecarboxysiroheme + 2 AH2 + 2 S-adenosyl-L-methionine = Fe-coproporphyrin III + 2 5'-deoxyadenosine + 2 L-methionine + 2 acetate + 2 A + 2 H(+). It participates in porphyrin-containing compound metabolism; protoheme biosynthesis. Involved in siroheme-dependent heme b biosynthesis. Catalyzes the conversion of didecarboxysiroheme into Fe-coproporphyrin III by oxidative loss of two acetic acid side chains. The protein is Fe-coproporphyrin III synthase of Methanosarcina barkeri (strain Fusaro / DSM 804).